The following is a 354-amino-acid chain: Protein RecA (354 aa).

Gly-65–Thr-72 contacts ATP.

Belongs to the RecA family.

The protein resides in the cytoplasm. Can catalyze the hydrolysis of ATP in the presence of single-stranded DNA, the ATP-dependent uptake of single-stranded DNA by duplex DNA, and the ATP-dependent hybridization of homologous single-stranded DNAs. It interacts with LexA causing its activation and leading to its autocatalytic cleavage. The chain is Protein RecA from Aeromonas hydrophila subsp. hydrophila (strain ATCC 7966 / DSM 30187 / BCRC 13018 / CCUG 14551 / JCM 1027 / KCTC 2358 / NCIMB 9240 / NCTC 8049).